The primary structure comprises 283 residues: Thymidylate synthase (283 aa).

R21 provides a ligand contact to dUMP. A (6R)-5,10-methylene-5,6,7,8-tetrahydrofolate-binding site is contributed by H51. 123–124 (RR) is a dUMP binding site. The Nucleophile role is filled by C156. DUMP contacts are provided by residues 185–188 (RSAD), N196, and 226–228 (HIY). D188 lines the (6R)-5,10-methylene-5,6,7,8-tetrahydrofolate pocket. Residue A282 coordinates (6R)-5,10-methylene-5,6,7,8-tetrahydrofolate.

It belongs to the thymidylate synthase family. Bacterial-type ThyA subfamily. Homodimer.

The protein resides in the cytoplasm. The enzyme catalyses dUMP + (6R)-5,10-methylene-5,6,7,8-tetrahydrofolate = 7,8-dihydrofolate + dTMP. Its pathway is pyrimidine metabolism; dTTP biosynthesis. Catalyzes the reductive methylation of 2'-deoxyuridine-5'-monophosphate (dUMP) to 2'-deoxythymidine-5'-monophosphate (dTMP) while utilizing 5,10-methylenetetrahydrofolate (mTHF) as the methyl donor and reductant in the reaction, yielding dihydrofolate (DHF) as a by-product. This enzymatic reaction provides an intracellular de novo source of dTMP, an essential precursor for DNA biosynthesis. The polypeptide is Thymidylate synthase (Flavobacterium johnsoniae (strain ATCC 17061 / DSM 2064 / JCM 8514 / BCRC 14874 / CCUG 350202 / NBRC 14942 / NCIMB 11054 / UW101) (Cytophaga johnsonae)).